A 712-amino-acid polypeptide reads, in one-letter code: Aryl hydrocarbon receptor nuclear translocator 2 (712 aa).

Positions 36-73 (AGAMPARGGKRRSGMDFDDEDGEGPSKFSRENHSEIER) are disordered. Arginine 42 is subject to Omega-N-methylarginine. Positions 63–73 (FSRENHSEIER) are enriched in basic and acidic residues. In terms of domain architecture, bHLH spans 63–116 (FSRENHSEIERRRRNKMTQYITELSDMVPTCSALARKPDKLTILRMAVSHMKSM). 2 consecutive PAS domains span residues 134–209 (TEQE…MTGR) and 323–393 (PVCM…VKLK). A PAC domain is found at 398-441 (SVMYRFRTKNREWLLIRTSSFTFQNPYSDEIEYVICTNTNVKQL). The disordered stretch occupies residues 573–712 (AWTGSRPPFP…DLGMFPPFSE (140 aa)). Composition is skewed to low complexity over residues 597-626 (SSHPYPADPSSYSPLSSPAASSPSGNAYPS) and 653-675 (SQWQSQHHGQQSGEQHSHQQPGQ).

As to quaternary structure, efficient DNA binding requires dimerization with another bHLH protein. Heterodimer with NPAS4 or SIM1. Heterodimer with the aryl hydrocarbon receptor (AHR) or the SIM1 protein. Interacts with TACC3. As to expression, restricted to adult brain and kidney.

It is found in the nucleus. In terms of biological role, transcription factor that plays a role in the development of the hypothalamo-pituitary axis, postnatal brain growth, and visual and renal function. Specifically recognizes the xenobiotic response element (XRE). The sequence is that of Aryl hydrocarbon receptor nuclear translocator 2 (Arnt2) from Mus musculus (Mouse).